The chain runs to 1095 residues: Voltage-gated inwardly rectifying potassium channel KCNH3 (1095 aa).

At 1 to 228 the chain is on the cytoplasmic side; it reads MPAMRGLLAP…HCGALRATWD (228 aa). In terms of domain architecture, PAS spans 18–90; it reads IATRFDGTHS…QQIRKALDEH (73 aa). Positions 93–145 constitute a PAC domain; the sequence is FKAELILYRKSGLPFWCLLDVIPIKNEKGEVALFLVSHKDISETKNRGGPDNW. Basic and acidic residues predominate over residues 137–150; sequence KNRGGPDNWKERGG. Residues 137 to 161 are disordered; it reads KNRGGPDNWKERGGGRRRYGRAGSK. The helical transmembrane segment at 229–249 threads the bilayer; it reads GFILLATLYVAVTVPYSVCVS. The Extracellular portion of the chain corresponds to 250–259; sequence TAREPSAARG. Residues 260–280 form a helical membrane-spanning segment; it reads PPSVCDLAVEVLFILDIVLNF. Residues 281-302 are Cytoplasmic-facing; it reads RTTFVSKSGQVVFAPKSICLHY. A helical membrane pass occupies residues 303–323; that stretch reads VTTWFLLDVIAALPFDLLHAF. At 324-331 the chain is on the extracellular side; that stretch reads KVNVYVGA. A helical; Voltage-sensor membrane pass occupies residues 332-352; it reads HLLKTVRLLRLLRLLPRLDRY. Residues 353-361 are Cytoplasmic-facing; sequence SQYSAVVLT. A helical transmembrane segment spans residues 362-382; the sequence is LLMAVFALLAHWVACVWFYIG. The Extracellular portion of the chain corresponds to 383-464; that stretch reads QQEIESSESE…GGPSLRSAYI (82 aa). The segment at 417-447 is disordered; sequence PDGGNSSGQSENCSSSSSSSGSGGGRGSEAN. Low complexity predominate over residues 419-436; the sequence is GGNSSGQSENCSSSSSSS. Asn421, Asn428, and Asn447 each carry an N-linked (GlcNAc...) asparagine glycan. Residues 465–485 constitute an intramembrane region (pore-forming); that stretch reads TSLYFALSSLTSVGFGNVSAN. The short motif at 476 to 481 is the Selectivity filter element; that stretch reads SVGFGN. Residues 486-490 lie on the Extracellular side of the membrane; it reads TDTEK. The helical transmembrane segment at 491–511 threads the bilayer; sequence IFSICTMLIGALMHAVVFGNV. The Cytoplasmic segment spans residues 512–1095; it reads TAIIQRMYAR…QWTQEEGTGV (584 aa). Residue 593-708 coordinates a nucleoside 3',5'-cyclic phosphate; it reads LFEAASRGCL…FAPRFSRGLR (116 aa). Disordered regions lie at residues 740 to 823, 854 to 883, and 965 to 1069; these read EEKE…LPPM, VGQS…PSEA, and GSVL…PWDP. Residues 784–796 show a composition bias toward basic residues; the sequence is TAPRPRLGGRGRP. Low complexity predominate over residues 857–872; it reads SGPECSSSPSPGTESG. The span at 974–991 shows a compositional bias: pro residues; the sequence is HPRPGQPPPLMAPWPWGP.

The protein belongs to the potassium channel family. H (Eag) (TC 1.A.1.20) subfamily. Kv12.2/KCNH3 sub-subfamily. In terms of assembly, the potassium channel is probably composed of a homo- or heterotetrameric complex of pore-forming alpha subunits that can associate with modulating beta subunits. Interacts with KCNE1 and KCNE3; these interactions regulate KCNH3 trafficking to the plasma membrane and its subsequent voltage-gated potassium channel activity. N-glycosylated. N-glycosylation mediates traffick to the cell membrane but is not necessary for voltage-gated potassium channel activity. As to expression, detected in brain, but not in other tissues.

It is found in the cell membrane. The enzyme catalyses K(+)(in) = K(+)(out). Pore-forming (alpha) subunit of a voltage-gated inwardly rectifying potassium channel. Charactherized by a fast rate of activation during depolarization followed by a rapid inactivation at much more depolarized value causing inward rectification due to a C-type inactivation mechanism. Exhibits a rapid recovery from inactivation. In Mus musculus (Mouse), this protein is Voltage-gated inwardly rectifying potassium channel KCNH3.